Here is a 59-residue protein sequence, read N- to C-terminus: Large ribosomal subunit protein bL32c (59 aa).

Residues 37–59 (SRSFSRGNEHPKPKGFSGQQANK) are disordered.

The protein belongs to the bacterial ribosomal protein bL32 family.

The protein resides in the plastid. It localises to the chloroplast. This is Large ribosomal subunit protein bL32c (rpl32) from Zea mays (Maize).